Consider the following 495-residue polypeptide: Tyrosine 3-monooxygenase (495 aa).

Position 19 is a phosphoserine; by CaMK2 (Ser19). At Ser31 the chain carries Phosphoserine. A Phosphoserine; by CaMK2 and PKA modification is found at Ser40. Over residues 41–53 the composition is skewed to basic and acidic residues; it reads LIEDARKEREKAE. Positions 41–65 are disordered; the sequence is LIEDARKEREKAEAASAASSEPGDL. Positions 328, 333, and 373 each coordinate Fe cation. Ser469 carries the phosphoserine modification.

The protein belongs to the biopterin-dependent aromatic amino acid hydroxylase family. As to quaternary structure, homotetramer. Interacts (when phosphorylated at Ser-19) with YWHAG; one YWHAG dimer bounds to one TH tetramer this interaction may influence the phosphorylation and dephosphorylation of other sites. It depends on Fe(2+) as a cofactor. In terms of processing, phosphorylated on Ser-19, Ser-31 and Ser-40 by several protein kinases with different site specificities. Phosphorylation at Ser-31 and Ser-40 leads to an increase of TH activity. Phosphorylation at Ser-40 activates the enzyme and also counteracts the feedback inhibition of TH by catecholamines. Phosphorylation of Ser-19 and Ser-31 triggers the proteasomal degradation of TH through the ubiquitin-proteasome pathway. Phosphorylation at Ser-31 facilitates transport of TH from the soma to the nerve terminals via the microtubule network. Phosphorylation at Ser-19 induces the high-affinity binding to the 14-3-3 protein YWHAG; this interaction may influence the phosphorylation and dephosphorylation of other sites. Ser-19 increases the phosphorylation at Ser-40 in a hierarchical manner, leading to increased activity.

It is found in the cytoplasm. The protein localises to the perinuclear region. Its subcellular location is the nucleus. The protein resides in the cell projection. It localises to the axon. It is found in the cytoplasmic vesicle. The protein localises to the secretory vesicle. Its subcellular location is the synaptic vesicle. It carries out the reaction (6R)-L-erythro-5,6,7,8-tetrahydrobiopterin + L-tyrosine + O2 = (4aS,6R)-4a-hydroxy-L-erythro-5,6,7,8-tetrahydrobiopterin + L-dopa. It functions in the pathway catecholamine biosynthesis; dopamine biosynthesis; dopamine from L-tyrosine: step 1/2. With respect to regulation, inhibited in feedback fashion by the catecholamine neurotransmitters, especially by dopamine in competition with tetrahydrobiopterin. Phosphorylation of several Ser/Thr residues in the N-terminus regulates the catalytic activity. Ser-31 and Ser-40 are readily phosphorylated to activate the catalytic activity. A Cysteine modification induced by N-ethylmaleimide (NEM), inhibits tyrosine 3-monooxygenase activity through the modification of the Cys-174. Functionally, catalyzes the conversion of L-tyrosine to L-dihydroxyphenylalanine (L-Dopa), the rate-limiting step in the biosynthesis of cathecolamines, dopamine, noradrenaline, and adrenaline. Uses tetrahydrobiopterin and molecular oxygen to convert tyrosine to L-Dopa. In addition to tyrosine, is able to catalyze the hydroxylation of phenylalanine and tryptophan with lower specificity. Positively regulates the regression of retinal hyaloid vessels during postnatal development. The sequence is that of Tyrosine 3-monooxygenase (TH) from Canis lupus familiaris (Dog).